We begin with the raw amino-acid sequence, 117 residues long: uncharacterized protein (117 aa).

It localises to the plastid. The protein resides in the chloroplast. This is an uncharacterized protein from Chlamydomonas reinhardtii (Chlamydomonas smithii).